An 85-amino-acid chain; its full sequence is Large ribosomal subunit protein bL27 (85 aa).

The tract at residues 1-21 is disordered; sequence MAHKKAGGSTRNGRDSESKRL.

It belongs to the bacterial ribosomal protein bL27 family.

The protein is Large ribosomal subunit protein bL27 of Ectopseudomonas mendocina (strain ymp) (Pseudomonas mendocina).